Here is a 269-residue protein sequence, read N- to C-terminus: MPGVETIKSSWADEVELDYGGLPPTTENVENGHKYVTEYKYNKDDKKTKVVRTYKISKQVVPKTVAKRRTWTKFGESKSDKPGPNSHTTMVSEEIIMQFLNSKEDEKANDPLLDPTKNIAKCRICNGEHWSVNCPYKGTAMDTNLMEKKAAAAASAAVDAPKSGKYVPPFLKDSQKGGLGMRGRDDTAAIRISNLSESMTEADLEELVKKIGPQSKMYLARDKNTGLCKGFAYVHFKQRKDAAAAIEILNGHGYDHLILSVEWSKPQNN.

One can recognise an RRM domain in the interval 188-266 (AAIRISNLSE…LILSVEWSKP (79 aa)).

This sequence belongs to the eIF-3 subunit G family. Component of the eukaryotic translation initiation factor 3 (eIF-3) complex. The eIF-3 complex interacts with pix.

It localises to the cytoplasm. In terms of biological role, RNA-binding component of the eukaryotic translation initiation factor 3 (eIF-3) complex, which is involved in protein synthesis of a specialized repertoire of mRNAs and, together with other initiation factors, stimulates binding of mRNA and methionyl-tRNAi to the 40S ribosome. The eIF-3 complex specifically targets and initiates translation of a subset of mRNAs involved in cell proliferation. This subunit can bind 18S rRNA. The protein is Eukaryotic translation initiation factor 3 subunit G-1 of Drosophila persimilis (Fruit fly).